A 462-amino-acid polypeptide reads, in one-letter code: Stabilizer of axonemal microtubules 1 (462 aa).

Mn regions lie at residues 30 to 64 (KPCF…KVNI), 65 to 97 (PMEG…PIQD), 98 to 131 (EMDF…QCND), 132 to 165 (KMEC…PASC), 166 to 199 (RFDH…LCNI), 200 to 232 (PLES…PSEV), 233 to 266 (PFDS…GLDI), 267 to 299 (PFPS…PPEG), 300 to 332 (KMDL…KKSD), 333 to 366 (RFES…FSDE), 367 to 400 (PMEY…RVNI), and 401 to 434 (PLEG…IFDE).

Belongs to the FAM154 family. As to quaternary structure, associates with microtubules via the Mn regions.

It localises to the cytoplasm. It is found in the cytoskeleton. Its subcellular location is the microtubule organizing center. The protein localises to the centrosome. The protein resides in the centriole. It localises to the cilium basal body. It is found in the cilium axoneme. Its function is as follows. May play a role in the regulation of cilium length. Stabilizes microtubules at low temperature. The protein is Stabilizer of axonemal microtubules 1 (Saxo1) of Rattus norvegicus (Rat).